We begin with the raw amino-acid sequence, 165 residues long: Nucleotide-binding protein Suden_0039 (165 aa).

It belongs to the YajQ family.

Nucleotide-binding protein. In Sulfurimonas denitrificans (strain ATCC 33889 / DSM 1251) (Thiomicrospira denitrificans (strain ATCC 33889 / DSM 1251)), this protein is Nucleotide-binding protein Suden_0039.